The primary structure comprises 331 residues: MATYKDAGVNIEEGYKSVNLMKEHVQKTFNKGVLNGIGSFAAMYELGKYKNPVLVSGTDGVGTKLKIAFELEKYNTIGIDCVAMCVNDILCHGAKPLFFLDYMACGKLKGEVAADIVKGVSDGCLRAGCALIGGETAEMPGFYKEGEYDIAGFAVGIVEKENIVDGQDIKEGDVLIGIASSGVHSNGYSLVRSVIKDFREEFHGKIIGEELLTPTKIYVKPVLQLLKSYPIKGMAHITGGGFYENIPRMFKDDLNVVISKNSFPRPDIFEYIISKGIEENHMFNVFNMGIGFVLCVDPCYEKKIIEKLIEQGEKAYKIGHIEKGERKVIIK.

Belongs to the AIR synthase family.

The protein localises to the cytoplasm. It catalyses the reaction 2-formamido-N(1)-(5-O-phospho-beta-D-ribosyl)acetamidine + ATP = 5-amino-1-(5-phospho-beta-D-ribosyl)imidazole + ADP + phosphate + H(+). It functions in the pathway purine metabolism; IMP biosynthesis via de novo pathway; 5-amino-1-(5-phospho-D-ribosyl)imidazole from N(2)-formyl-N(1)-(5-phospho-D-ribosyl)glycinamide: step 2/2. In Clostridium tetani (strain Massachusetts / E88), this protein is Phosphoribosylformylglycinamidine cyclo-ligase.